A 158-amino-acid chain; its full sequence is NADPH-dependent 7-cyano-7-deazaguanine reductase (158 aa).

The active-site Thioimide intermediate is Cys56. Asp63 acts as the Proton donor in catalysis. Substrate-binding positions include 78 to 80 (VES) and 97 to 98 (HE).

It belongs to the GTP cyclohydrolase I family. QueF type 1 subfamily.

The protein resides in the cytoplasm. The enzyme catalyses 7-aminomethyl-7-carbaguanine + 2 NADP(+) = 7-cyano-7-deazaguanine + 2 NADPH + 3 H(+). The protein operates within tRNA modification; tRNA-queuosine biosynthesis. Functionally, catalyzes the NADPH-dependent reduction of 7-cyano-7-deazaguanine (preQ0) to 7-aminomethyl-7-deazaguanine (preQ1). The sequence is that of NADPH-dependent 7-cyano-7-deazaguanine reductase from Rhodopseudomonas palustris (strain HaA2).